A 239-amino-acid polypeptide reads, in one-letter code: Small ribosomal subunit protein uS2 (239 aa).

It belongs to the universal ribosomal protein uS2 family.

In Lysinibacillus sphaericus (strain C3-41), this protein is Small ribosomal subunit protein uS2.